Reading from the N-terminus, the 408-residue chain is MDRLNQLSGQLKPNAKQSILQKNPDDVVIVAAYRTAIGKGFKGSFRSVRSEFILTEFLKEFIKKTNIDPSLIEDVAIGNVLNQAAGATEHRGACLAAGIPYTAAFIAVNRFCSSGLMAISDIANKIKTGEIECGLAGGAESMSTNYRDPRVAPRIDPHLADDAQMEKCLIPMGITNENVANQFNISRERQDEFAAKSYNKAAKAVAAGAFKSEILPIRSIIRNSDGTEKEIIVDTDEGPREGVTAESLGKLRPAFDGTTTAGNASQVSDGAAAVLLMKRSLAEAKGYPIIGKYVLCSTAGVPPEIMGVGPAYAIPEVLKRTGLTVDDIDVFEINEAFAAQCLYSAEQVNVPEEKLNINGGAIALGHPLGETGARQYATIIPLLKPGQIGLTSMCIGSGMGSASILVRE.

Residue cysteine 112 is the Acyl-thioester intermediate of the active site. Active-site proton acceptor residues include histidine 366 and cysteine 394.

The protein belongs to the thiolase-like superfamily. Thiolase family. As to quaternary structure, homodimer.

Its subcellular location is the peroxisome. The catalysed reaction is an acyl-CoA + acetyl-CoA = a 3-oxoacyl-CoA + CoA. It functions in the pathway lipid metabolism; fatty acid metabolism. This Candida tropicalis (Yeast) protein is 3-ketoacyl-CoA thiolase A, peroxisomal.